Reading from the N-terminus, the 330-residue chain is Delta-aminolevulinic acid dehydratase (330 aa).

Residues C122, C124, H131, and C132 each coordinate Zn(2+). K199 serves as the catalytic Schiff-base intermediate with substrate. K199 is subject to N6-succinyllysine. 5-aminolevulinate is bound at residue R209. Position 215 is a phosphoserine (S215). R221 is a binding site for 5-aminolevulinate. C223 lines the Zn(2+) pocket. K252 acts as the Schiff-base intermediate with substrate in catalysis. K252 bears the N6-succinyllysine mark. 2 residues coordinate 5-aminolevulinate: S279 and Y318.

The protein belongs to the ALAD family. Homooctamer; active form. Homohexamer; low activity form. Zn(2+) is required as a cofactor.

Its subcellular location is the cytoplasm. The protein localises to the cytosol. The catalysed reaction is 2 5-aminolevulinate = porphobilinogen + 2 H2O + H(+). It participates in porphyrin-containing compound metabolism; protoporphyrin-IX biosynthesis; coproporphyrinogen-III from 5-aminolevulinate: step 1/4. Its activity is regulated as follows. Can alternate between a fully active homooctamer and a low-activity homohexamer. A bound magnesium ion may promote the assembly of the fully active homooctamer. The magnesium-binding site is absent in the low-activity homohexamer. Inhibited by compounds that favor the hexameric state. Inhibited by divalent lead ions. The lead ions partially displace the zinc cofactor. In terms of biological role, catalyzes an early step in the biosynthesis of tetrapyrroles. Binds two molecules of 5-aminolevulinate per subunit, each at a distinct site, and catalyzes their condensation to form porphobilinogen. This Mus musculus (Mouse) protein is Delta-aminolevulinic acid dehydratase (Alad).